Consider the following 388-residue polypeptide: MVTVEEVRKAQRAEGPATILAIGTATPANCVDQSTYPDYYFRITNSDHMTDLKQKFQRMCDKSMITKRYMHLTEEILKENPSFCEYMAPSLDARQDIVVVEVPKLGKEAAQSAIKEWGQPKSKITHVIFCTTSGVDMPGADYQLTKLLGLRPSVKRLMMYQQGCFAGGTVLRVAKDLAENNKAARVLVVCSEITVVTFRGPNETHLDSLVGQALFGDGAAAIIVGSDPTPAEKPLFQLVSAAQTLAPDSCGAIDGHLREVGLTFHLLKDVPSIVSNNIEKCLSEAFNPLGISDWNSIFWIAHPGGPAILDQVEDKLGLKPEKLRATRHVLSEYGNMSSACVLFILDEMRKASSNDGLGTTGEGLEWGVLFGFGPGLTIETVVLHSVPA.

Residue C164 is part of the active site.

It belongs to the thiolase-like superfamily. Chalcone/stilbene synthases family.

It carries out the reaction (E)-4-coumaroyl-CoA + 3 malonyl-CoA + 3 H(+) = 2',4,4',6'-tetrahydroxychalcone + 3 CO2 + 4 CoA. It participates in secondary metabolite biosynthesis; flavonoid biosynthesis. In terms of biological role, the primary product of this enzyme is 4,2',4',6'-tetrahydroxychalcone (also termed naringenin-chalcone or chalcone) which can under specific conditions spontaneously isomerize into naringenin. This is Chalcone synthase D (CHSD) from Ipomoea nil (Japanese morning glory).